Here is a 734-residue protein sequence, read N- to C-terminus: Photosystem I P700 chlorophyll a apoprotein A2 (734 aa).

Transmembrane regions (helical) follow at residues 46 to 69, 135 to 158, 175 to 199, 273 to 291, 330 to 353, 369 to 395, 417 to 439, and 517 to 535; these read IFAS…FHVA, LYTA…LHLQ, LNHH…HVAI, IAHH…GHQY, LHFQ…QHIY, AALY…IFFI, AIIS…LYVH, and FLVH…LILV. The [4Fe-4S] cluster site is built by Cys559 and Cys568. 2 consecutive transmembrane segments (helical) span residues 575-596 and 643-665; these read AFYL…YFHW and LGVW…MFLI. Chlorophyll a-binding residues include His654, Met662, and Tyr670. Residue Trp671 coordinates phylloquinone. Residues 707–727 form a helical membrane-spanning segment; it reads LVGLVHFSVGYVLTYGSFLIA.

Belongs to the PsaA/PsaB family. In terms of assembly, the PsaA/B heterodimer binds the P700 chlorophyll special pair and subsequent electron acceptors. PSI consists of a core antenna complex that captures photons, and an electron transfer chain that converts photonic excitation into a charge separation. The eukaryotic PSI reaction center is composed of at least 11 subunits. P700 is a chlorophyll a/chlorophyll a' dimer, A0 is one or more chlorophyll a, A1 is one or both phylloquinones and FX is a shared 4Fe-4S iron-sulfur center. is required as a cofactor.

The protein resides in the plastid. Its subcellular location is the chloroplast thylakoid membrane. The enzyme catalyses reduced [plastocyanin] + hnu + oxidized [2Fe-2S]-[ferredoxin] = oxidized [plastocyanin] + reduced [2Fe-2S]-[ferredoxin]. In terms of biological role, psaA and PsaB bind P700, the primary electron donor of photosystem I (PSI), as well as the electron acceptors A0, A1 and FX. PSI is a plastocyanin/cytochrome c6-ferredoxin oxidoreductase, converting photonic excitation into a charge separation, which transfers an electron from the donor P700 chlorophyll pair to the spectroscopically characterized acceptors A0, A1, FX, FA and FB in turn. Oxidized P700 is reduced on the lumenal side of the thylakoid membrane by plastocyanin or cytochrome c6. The polypeptide is Photosystem I P700 chlorophyll a apoprotein A2 (Oltmannsiellopsis viridis (Marine flagellate)).